The primary structure comprises 137 residues: Large ribosomal subunit protein uL16 (137 aa).

It belongs to the universal ribosomal protein uL16 family. Part of the 50S ribosomal subunit.

Binds 23S rRNA and is also seen to make contacts with the A and possibly P site tRNAs. This Beijerinckia indica subsp. indica (strain ATCC 9039 / DSM 1715 / NCIMB 8712) protein is Large ribosomal subunit protein uL16.